Consider the following 1342-residue polypeptide: DNA-directed RNA polymerase subunit beta (1342 aa).

It belongs to the RNA polymerase beta chain family. In terms of assembly, the RNAP catalytic core consists of 2 alpha, 1 beta, 1 beta' and 1 omega subunit. When a sigma factor is associated with the core the holoenzyme is formed, which can initiate transcription.

It catalyses the reaction RNA(n) + a ribonucleoside 5'-triphosphate = RNA(n+1) + diphosphate. In terms of biological role, DNA-dependent RNA polymerase catalyzes the transcription of DNA into RNA using the four ribonucleoside triphosphates as substrates. The protein is DNA-directed RNA polymerase subunit beta of Salmonella agona (strain SL483).